The following is a 392-amino-acid chain: MGDGQAGSVININGSASGQQAPTSNSPTLTRKSSSSELPPELRILCFDLTHYNQTTQFLLSCAGVFILYILYGYLQELIFTVEGFKPFGWFLTLVQFGYYIGFGLVERRLEAYRSGRRSLWNVEPAPRCIPMKTYLVLAALTLGTMGLSNSSLGYLNYPTQVIFKCCKLIPVLVGSILIQGKRYGPLDFAAASCMCIGLAWFTLADSQMTPNFNLLGVAMISGALLCDAAIGNVQEKAMKEHKAPSSEVVFYSYGLGFVYLFVIMLVTGNFFSGFAFCLEHPLQTFGYGFLFSLSGYLGIQFVLALVRSSGAPIAATVTTARKAVTIAFSFVLFSKPFTVQYLWSGLIVVLGIYLNVYSKKNKLTFADIRSRFKQFGFRLARSPSRKFLVEV.

The segment at Asn11–Ser35 is disordered. 10 helical membrane passes run Cys62–Val82, Pro87–Glu107, Leu136–Leu156, Pro159–Ile179, Gly185–Ala205, Asn212–Gly232, Val249–Gly269, Phe286–Leu306, Ile314–Phe334, and Phe338–Tyr358.

Belongs to the nucleotide-sugar transporter family. SLC35B subfamily.

The protein resides in the golgi apparatus membrane. Functionally, mediates the transport of adenosine 3'-phospho 5'-phosphosulfate (PAPS), from cytosol into Golgi. PAPS is a universal sulfuryl donor for sulfation events that take place in the Golgi. Essential for viability. Involved in glycosaminoglycan synthesis and the subsequent signaling. May be involved in hh and dpp signaling by controlling the sulfation of heparan sulfate (HS). This chain is Adenosine 3'-phospho 5'-phosphosulfate transporter 2, found in Drosophila pseudoobscura pseudoobscura (Fruit fly).